Here is a 380-residue protein sequence, read N- to C-terminus: Chorismate synthase (380 aa).

Arg-48 serves as a coordination point for NADP(+). FMN is bound by residues 126-128, Gly-300, 315-319, and Arg-342; these read HFS and KPISS.

Belongs to the chorismate synthase family. In terms of assembly, homotetramer. The cofactor is FMNH2.

It catalyses the reaction 5-O-(1-carboxyvinyl)-3-phosphoshikimate = chorismate + phosphate. It participates in metabolic intermediate biosynthesis; chorismate biosynthesis; chorismate from D-erythrose 4-phosphate and phosphoenolpyruvate: step 7/7. Functionally, catalyzes the anti-1,4-elimination of the C-3 phosphate and the C-6 proR hydrogen from 5-enolpyruvylshikimate-3-phosphate (EPSP) to yield chorismate, which is the branch point compound that serves as the starting substrate for the three terminal pathways of aromatic amino acid biosynthesis. This reaction introduces a second double bond into the aromatic ring system. This Lancefieldella parvula (strain ATCC 33793 / DSM 20469 / CCUG 32760 / JCM 10300 / KCTC 3663 / VPI 0546 / 1246) (Atopobium parvulum) protein is Chorismate synthase.